We begin with the raw amino-acid sequence, 226 residues long: NADH-ubiquinone oxidoreductase chain 6 (226 aa).

The next 5 helical transmembrane spans lie at 2 to 22, 28 to 48, 56 to 76, 90 to 110, and 169 to 189; these read STLG…FVIL, IYSI…LLTV, IYIL…VMMI, YNIY…ILIT, and IWFI…IYIT.

It belongs to the complex I subunit 6 family.

It localises to the mitochondrion membrane. It catalyses the reaction a ubiquinone + NADH + 5 H(+)(in) = a ubiquinol + NAD(+) + 4 H(+)(out). In terms of biological role, core subunit of the mitochondrial membrane respiratory chain NADH dehydrogenase (Complex I) that is believed to belong to the minimal assembly required for catalysis. Complex I functions in the transfer of electrons from NADH to the respiratory chain. The immediate electron acceptor for the enzyme is believed to be ubiquinone. The sequence is that of NADH-ubiquinone oxidoreductase chain 6 (nad6) from Dictyostelium citrinum (Slime mold).